The primary structure comprises 358 residues: Phospho-N-acetylmuramoyl-pentapeptide-transferase (358 aa).

A run of 10 helical transmembrane segments spans residues 28 to 48, 70 to 90, 92 to 112, 133 to 153, 165 to 185, 196 to 216, 233 to 253, 260 to 280, 285 to 305, and 335 to 355; these read AALMTALLISIILGPRFITWL, TPTMGGLLMLFSLSVSLLLWA, LTNIYIWQAFFVFAGFGAVGF, MGGQLAVACVAMLLLFVNPDY, VTFDLGWFYLPFGVFVMVAAS, GLAIGPSIVACIVFSIFIYIT, VGEVTIFCAALVGAGLGFLWF, VFMGDVGSLSIGGVLGYLALL, LVLAVVGGLFVAETLSVIVQV, and KIIIRFWITSILLGLMALSVL.

This sequence belongs to the glycosyltransferase 4 family. MraY subfamily. The cofactor is Mg(2+).

It localises to the cell inner membrane. The catalysed reaction is UDP-N-acetyl-alpha-D-muramoyl-L-alanyl-gamma-D-glutamyl-meso-2,6-diaminopimeloyl-D-alanyl-D-alanine + di-trans,octa-cis-undecaprenyl phosphate = di-trans,octa-cis-undecaprenyl diphospho-N-acetyl-alpha-D-muramoyl-L-alanyl-D-glutamyl-meso-2,6-diaminopimeloyl-D-alanyl-D-alanine + UMP. It participates in cell wall biogenesis; peptidoglycan biosynthesis. Catalyzes the initial step of the lipid cycle reactions in the biosynthesis of the cell wall peptidoglycan: transfers peptidoglycan precursor phospho-MurNAc-pentapeptide from UDP-MurNAc-pentapeptide onto the lipid carrier undecaprenyl phosphate, yielding undecaprenyl-pyrophosphoryl-MurNAc-pentapeptide, known as lipid I. This chain is Phospho-N-acetylmuramoyl-pentapeptide-transferase, found in Desulfovibrio desulfuricans (strain ATCC 27774 / DSM 6949 / MB).